Here is a 409-residue protein sequence, read N- to C-terminus: Phosphoglycerate kinase (409 aa).

Substrate is bound by residues 23–25, 63–66, R120, and R160; these read DIN and HQSR. ATP-binding positions include E333 and 359–362; that span reads GGHL.

Belongs to the phosphoglycerate kinase family. In terms of assembly, monomer.

The protein localises to the cytoplasm. It catalyses the reaction (2R)-3-phosphoglycerate + ATP = (2R)-3-phospho-glyceroyl phosphate + ADP. It participates in carbohydrate degradation; glycolysis; pyruvate from D-glyceraldehyde 3-phosphate: step 2/5. The sequence is that of Phosphoglycerate kinase (pgk) from Methanobacterium bryantii.